The primary structure comprises 466 residues: Vimentin (466 aa).

Composition is skewed to low complexity over residues 1 to 13 and 20 to 33; these read MSTRSVSSSSYRR and TSSRPSSNRSYVTT. Positions 1-33 are disordered; that stretch reads MSTRSVSSSSYRRMFGGSGTSSRPSSNRSYVTT. Serine 2 is subject to N-acetylserine. A head region spans residues 2–95; it reads STRSVSSSSY…FSLADAINTE (94 aa). A Phosphoserine modification is found at serine 5. Phosphoserine; by PKA and PKC; alternate is present on serine 7. Residue serine 7 is glycosylated (O-linked (GlcNAc) serine; alternate). Serine 8 is modified (phosphoserine). Serine 9 and serine 10 each carry phosphoserine; by PKC. Position 20 is a phosphothreonine (threonine 20). Serine 25 and serine 26 each carry phosphoserine. Threonine 33 carries an O-linked (GlcNAc) threonine glycan. Serine 34 is a glycosylation site (O-linked (GlcNAc) serine; alternate). Serine 34 is modified (phosphoserine; by PKC; alternate). Residue serine 39 is modified to Phosphoserine; by CaMK2, PKA, PKC and ROCK2. Serine 42 carries the post-translational modification Phosphoserine; by PKC. Phosphoserine; by PKA is present on serine 47. A phosphoserine mark is found at serine 49 and serine 51. Tyrosine 53 carries the phosphotyrosine modification. Phosphoserine occurs at positions 55 and 56. Residue tyrosine 61 is modified to Phosphotyrosine. Residue serine 66 is modified to Phosphoserine; by PKA and PKC. Serine 72 is subject to Phosphoserine; by AURKB and ROCK2. 3 positions are modified to phosphoserine: serine 73, serine 83, and serine 87. A coil 1A region spans residues 96-131; it reads FKNTRTNEKVELQELNDRFANYIDKVRFLEQQNKIL. A coiled-coil region spans residues 96–131; that stretch reads FKNTRTNEKVELQELNDRFANYIDKVRFLEQQNKIL. Positions 103–411 constitute an IF rod domain; that stretch reads EKVELQELND…KLLEGEESRI (309 aa). Lysine 104 is covalently cross-linked (Glycyl lysine isopeptide (Lys-Gly) (interchain with G-Cter in SUMO2)). At tyrosine 117 the chain carries Phosphotyrosine. Residues lysine 120, lysine 129, and lysine 139 each carry the N6-acetyllysine; alternate modification. Residues lysine 120 and lysine 129 each carry the N6-succinyllysine; alternate modification. Residues lysine 120, lysine 129, and lysine 139 each participate in a glycyl lysine isopeptide (Lys-Gly) (interchain with G-Cter in SUMO2); alternate cross-link. Residues 132–153 form a linker 1 region; the sequence is LAELEQLKGQGKSRLGDLYEEE. Serine 144 is subject to Phosphoserine. Positions 154–245 form a coiled coil; it reads MRELRRQVDQ…KLHDEEIQEL (92 aa). Residues 154–245 are coil 1B; sequence MRELRRQVDQ…KLHDEEIQEL (92 aa). Lysine 168 is subject to N6-acetyllysine. Lysine 188 carries the post-translational modification N6-acetyllysine; alternate. Lysine 188 bears the N6-succinyllysine; alternate mark. Phosphoserine is present on serine 214. Residue lysine 223 is modified to N6-acetyllysine; alternate. Residue lysine 223 forms a Glycyl lysine isopeptide (Lys-Gly) (interchain with G-Cter in SUMO2); alternate linkage. Serine 226 bears the Phosphoserine mark. Lysine 235 is modified (N6-acetyllysine). Residues 246 to 268 form a linker 12 region; the sequence is QAQIQEQHVQIDVDVSKPDLTAA. Lysine 262 participates in a covalent cross-link: Glycyl lysine isopeptide (Lys-Gly) (interchain with G-Cter in SUMO2). A coil 2 region spans residues 269–407; it reads LRDVRQQYES…ATYRKLLEGE (139 aa). At lysine 294 the chain carries N6-acetyllysine; alternate. At lysine 294 the chain carries N6-succinyllysine; alternate. A Glycyl lysine isopeptide (Lys-Gly) (interchain with G-Cter in SUMO2); alternate cross-link involves residue lysine 294. Serine 299 carries the post-translational modification Phosphoserine. The stretch at 303–407 forms a coiled coil; that stretch reads NRNNDALRQA…ATYRKLLEGE (105 aa). Lysine 313 participates in a covalent cross-link: Glycyl lysine isopeptide (Lys-Gly) (interchain with G-Cter in SUMO2). Residue serine 325 is modified to Phosphoserine. The short motif at 326–329 is the [IL]-x-C-x-x-[DE] motif element; it reads LTCE. Position 373 is an N6-acetyllysine; alternate (lysine 373). Residue lysine 373 forms a Glycyl lysine isopeptide (Lys-Gly) (interchain with G-Cter in SUMO2); alternate linkage. Positions 408–466 are tail; the sequence is ESRISLPLPNFSSLNLRETNLESLPLVDTHSKRTLLIKTVETRDGQVINETSQHHDDLE. 4 positions are modified to phosphoserine: serine 409, serine 412, serine 419, and serine 420. Threonine 426 carries the post-translational modification Phosphothreonine. The residue at position 430 (serine 430) is a Phosphoserine. Threonine 436 carries the phosphothreonine modification. Serine 438 carries the post-translational modification Phosphoserine. A Glycyl lysine isopeptide (Lys-Gly) (interchain with G-Cter in SUMO2) cross-link involves residue lysine 439. N6-acetyllysine; alternate is present on lysine 445. Position 445 is an N6-succinyllysine; alternate (lysine 445). Lysine 445 participates in a covalent cross-link: Glycyl lysine isopeptide (Lys-Gly) (interchain with G-Cter in SUMO2); alternate. Residue lysine 445 forms a Glycyl lysine isopeptide (Lys-Gly) (interchain with G-Cter in SUMO1); alternate linkage. 2 positions are modified to phosphothreonine: threonine 446 and threonine 458. Serine 459 carries the phosphoserine modification.

Belongs to the intermediate filament family. As to quaternary structure, homomer assembled from elementary dimers. Identified in complexes that contain VIM, EZR, AHNAK, BFSP1, BFSP2, ANK2, PLEC, PRX and spectrin. Interacts with BCAS3. Interacts with LGSN. Interacts with SYNM. Interacts (via rod region) with PLEC (via CH 1 domain). Interacts with STK33. Interacts with LARP6. Interacts with RAB8B. Interacts with TOR1A; the interaction associates TOR1A with the cytoskeleton. Interacts with TOR1AIP1. Interacts with TOR1AIP1. Interacts with DIAPH1. Interacts with EPPK1; interaction is dependent of higher-order structure of intermediate filament. Interacts with the non-receptor tyrosine kinase SRMS; the interaction leads to phosphorylation of VIM. Interacts with NOD2. Interacts (via head region) with CORO1C. Interacts with HDGF. Interacts with PRKCE (via phorbol-ester/DAG-type 2 domain). Interacts with BFSP2. Interacts with PPL. Interacts with PKP1 and PKP2. Interacts with SCRIB (via PDZ domains); the interaction protects SCRIB from proteasomal degradation and facilitates SCRIB localization to intermediate filaments, the interaction is reduced by cell contact inhibition. One of the most prominent phosphoproteins in various cells of mesenchymal origin. Phosphorylation is enhanced during cell division, at which time vimentin filaments are significantly reorganized. Phosphorylation by PKN1 inhibits the formation of filaments. Filament disassembly during mitosis is promoted by phosphorylation at Ser-55 as well as by nestin. Phosphorylated at Ser-56 by CDK5 during neutrophil secretion in the cytoplasm. Phosphorylated by STK33. Phosphorylated on tyrosine residues by SRMS. In terms of processing, S-nitrosylation is induced by interferon-gamma and oxidatively-modified low-densitity lipoprotein (LDL(ox)) possibly implicating the iNOS-S100A8/9 transnitrosylase complex.

It localises to the cytoplasm. The protein resides in the cytoskeleton. The protein localises to the nucleus matrix. It is found in the cell membrane. Functionally, vimentins are class-III intermediate filaments found in various non-epithelial cells, especially mesenchymal cells. Vimentin is attached to the nucleus, endoplasmic reticulum, and mitochondria, either laterally or terminally. Plays a role in cell directional movement, orientation, cell sheet organization and Golgi complex polarization at the cell migration front. Protects SCRIB from proteasomal degradation and facilitates its localization to intermediate filaments in a cell contact-mediated manner. Its function is as follows. Involved with LARP6 in the stabilization of type I collagen mRNAs for CO1A1 and CO1A2. This chain is Vimentin, found in Rattus norvegicus (Rat).